The sequence spans 455 residues: MPNIDTATMTPREIVQELDRHIVGQHDAKRAVAIALRNRWRRMQLPEELRNEVMPKNILMIGPTGVGKTEIARRLATLANAPFVKVEATRFTEVGYVGKDVEQIIRDLADTAVKLYREQAKVRVRNQAEERAEDRILDALLPRRATGIGFDPEAARNEPSSQDNDTRIKFRRMLRNGELDEREIELEVAVNASMDIMTPPGMEEMGQQLRQMFSNLGSGKSQKRKLTIKAARPLLIEEEAGKLVNEDDVRTAAIEACEQHGIVFIDEIDKVAKRGEAGSSGGDVSREGVQRDLLPLVEGSNVSTKYGTVKTDHILFIASGAFHLAKPSDLIPELQGRFPIRVELTALTKADFVRILTEPKAALIKQYEALLQTEGVALTFASDAVDRLAEIAAQVNERQENIGARRLHTVLERLLDVLSYEAPDRDGQSVTVDAAYVDAQLGELVQDPDLSRYIL.

Residues Val-23, 65 to 70 (GVGKTE), Asp-266, Glu-333, and Arg-405 each bind ATP.

This sequence belongs to the ClpX chaperone family. HslU subfamily. As to quaternary structure, a double ring-shaped homohexamer of HslV is capped on each side by a ring-shaped HslU homohexamer. The assembly of the HslU/HslV complex is dependent on binding of ATP.

The protein resides in the cytoplasm. ATPase subunit of a proteasome-like degradation complex; this subunit has chaperone activity. The binding of ATP and its subsequent hydrolysis by HslU are essential for unfolding of protein substrates subsequently hydrolyzed by HslV. HslU recognizes the N-terminal part of its protein substrates and unfolds these before they are guided to HslV for hydrolysis. The polypeptide is ATP-dependent protease ATPase subunit HslU (Xanthomonas axonopodis pv. citri (strain 306)).